The sequence spans 600 residues: 1-deoxy-D-xylulose-5-phosphate synthase (600 aa).

Thiamine diphosphate is bound by residues H57 and 98–100 (GHA). D125 lines the Mg(2+) pocket. Thiamine diphosphate contacts are provided by residues 126–127 (AS), N155, Y264, and E343. Mg(2+) is bound at residue N155.

The protein belongs to the transketolase family. DXPS subfamily. In terms of assembly, homodimer. The cofactor is Mg(2+). Thiamine diphosphate serves as cofactor.

The catalysed reaction is D-glyceraldehyde 3-phosphate + pyruvate + H(+) = 1-deoxy-D-xylulose 5-phosphate + CO2. It participates in metabolic intermediate biosynthesis; 1-deoxy-D-xylulose 5-phosphate biosynthesis; 1-deoxy-D-xylulose 5-phosphate from D-glyceraldehyde 3-phosphate and pyruvate: step 1/1. Catalyzes the acyloin condensation reaction between C atoms 2 and 3 of pyruvate and glyceraldehyde 3-phosphate to yield 1-deoxy-D-xylulose-5-phosphate (DXP). The sequence is that of 1-deoxy-D-xylulose-5-phosphate synthase from Fusobacterium nucleatum subsp. nucleatum (strain ATCC 25586 / DSM 15643 / BCRC 10681 / CIP 101130 / JCM 8532 / KCTC 2640 / LMG 13131 / VPI 4355).